The chain runs to 343 residues: uncharacterized protein (343 aa).

The next 11 membrane-spanning stretches (helical) occupy residues 13 to 33, 44 to 64, 71 to 91, 121 to 141, 148 to 168, 177 to 197, 203 to 223, 244 to 264, 269 to 289, 296 to 316, and 320 to 340; these read VILY…SMCG, LWGY…ATLD, MHPV…LFFI, ILLL…LTGL, NASL…YLIF, FLGI…GDFS, VAVT…LDTV, VGGF…ELPL, YALG…YIAI, MVGA…FIIL, and FSIM…ILYW. EamA domains are found at residues 55 to 192 and 216 to 340; these read IFFG…YLLT and FFWS…ILYW.

It belongs to the EamA transporter family.

The protein localises to the cell membrane. This is an uncharacterized protein from Methanothermobacter thermautotrophicus (strain ATCC 29096 / DSM 1053 / JCM 10044 / NBRC 100330 / Delta H) (Methanobacterium thermoautotrophicum).